We begin with the raw amino-acid sequence, 239 residues long: Uridylate kinase (239 aa).

12-15 (KLSG) lines the ATP pocket. The tract at residues 20–25 (GDQGAG) is involved in allosteric activation by GTP. UMP is bound at residue Gly-54. Positions 55 and 59 each coordinate ATP. Residues Asp-74 and 135 to 142 (TGNPFFTT) each bind UMP. Thr-162, Tyr-168, and Asp-171 together coordinate ATP.

Belongs to the UMP kinase family. Homohexamer.

The protein resides in the cytoplasm. It catalyses the reaction UMP + ATP = UDP + ADP. Its pathway is pyrimidine metabolism; CTP biosynthesis via de novo pathway; UDP from UMP (UMPK route): step 1/1. Allosterically activated by GTP. Inhibited by UTP. Catalyzes the reversible phosphorylation of UMP to UDP. The polypeptide is Uridylate kinase (Methylococcus capsulatus (strain ATCC 33009 / NCIMB 11132 / Bath)).